A 340-amino-acid polypeptide reads, in one-letter code: Short-chain dehydrogenase/reductase prx1 (340 aa).

Ile-60, Lys-84, Asp-104, Asn-131, and Lys-162 together coordinate NADP(+). Residue Ser-184 is the Proton donor of the active site. Residues Tyr-210 and Lys-214 each coordinate NADP(+). Tyr-210 functions as the Proton acceptor in the catalytic mechanism. The active-site Lowers pKa of active site Tyr is the Lys-214.

Belongs to the short-chain dehydrogenases/reductases (SDR) family.

It participates in sesquiterpene biosynthesis. Short-chain dehydrogenase/reductase; part of the gene cluster that mediates the biosynthesis of PR-toxin, a bicyclic sesquiterpene belonging to the eremophilane class and acting as a mycotoxin. The first step of the pathway is catalyzed by the aristolochene synthase which performs the cyclization of trans,trans-farnesyl diphosphate (FPP) to the bicyclic sesquiterpene aristolochene. Following the formation of aristolochene, the non-oxygenated aristolochene is converted to the trioxygenated intermediate eremofortin B, via 7-epi-neopetasone. This conversion appears to involve three enzymes, a hydroxysterol oxidase-like enzyme, the quinone-oxidase prx3 that forms the quinone-type-structure in the bicyclic nucleus of aristolochene with the C8-oxo group and the C-3 hydroxyl group, and the P450 monooxygenase prx9 that introduces the epoxide at the double bond between carbons 1 and 2. No monoxy or dioxy-intermediates have been reported to be released to the broth, so these three early oxidative reactions may be coupled together. Eremofortin B is further oxidized by another P450 monooxygenase, that introduces a second epoxide between carbons 7 and 11 prior to acetylation to eremofortin A by the acetyltransferase prx11. The second epoxidation may be performed by a second P450 monooxygenase. After the acetylation step, eremofortin A is converted to eremofortin C and then to PR-toxin. First the conversion of eremofortin A to eremofortin C proceeds by oxidation of the side chain of the molecule at C-12 and is catalyzed by the short-chain oxidoreductase prx1. The cytochrome P450 monooxygenase prx8 also plays a role in this step. The primary alcohol formed at C-12 is finally oxidized by the short-chain alcohol dehydrogenase prx4 that forms PR-toxin. The sequence is that of Short-chain dehydrogenase/reductase prx1 from Penicillium rubens (strain ATCC 28089 / DSM 1075 / NRRL 1951 / Wisconsin 54-1255) (Penicillium chrysogenum).